The following is a 122-amino-acid chain: Large ribosomal subunit protein uL14 (122 aa).

Belongs to the universal ribosomal protein uL14 family. In terms of assembly, part of the 50S ribosomal subunit. Forms a cluster with proteins L3 and L19. In the 70S ribosome, L14 and L19 interact and together make contacts with the 16S rRNA in bridges B5 and B8.

Its function is as follows. Binds to 23S rRNA. Forms part of two intersubunit bridges in the 70S ribosome. This chain is Large ribosomal subunit protein uL14, found in Desulfovibrio desulfuricans (strain ATCC 27774 / DSM 6949 / MB).